A 68-amino-acid chain; its full sequence is Large ribosomal subunit protein bL31 (68 aa).

It belongs to the bacterial ribosomal protein bL31 family. Type A subfamily. Part of the 50S ribosomal subunit.

Its function is as follows. Binds the 23S rRNA. This Helicobacter hepaticus (strain ATCC 51449 / 3B1) protein is Large ribosomal subunit protein bL31.